The chain runs to 171 residues: Ribosome maturation factor RimM (171 aa).

The region spanning 96 to 170 (PDSYYHFQLE…TMTVRLPDGL (75 aa)) is the PRC barrel domain.

This sequence belongs to the RimM family. In terms of assembly, binds ribosomal protein uS19.

The protein resides in the cytoplasm. Its function is as follows. An accessory protein needed during the final step in the assembly of 30S ribosomal subunit, possibly for assembly of the head region. Essential for efficient processing of 16S rRNA. May be needed both before and after RbfA during the maturation of 16S rRNA. It has affinity for free ribosomal 30S subunits but not for 70S ribosomes. In Heliobacterium modesticaldum (strain ATCC 51547 / Ice1), this protein is Ribosome maturation factor RimM.